Consider the following 127-residue polypeptide: MYLCYTCFFLPSYDCKRLFTIVRAYIPARLSCNQPMVLFFTSPSSSSLYSLLFSKVSIISCAVLPLSIPFRMNLYNLFRLEKVFLFLLSLHLLPYLASRCLIDGFPLIPVSYSSHIVFTSVGAFNIL.

2 consecutive transmembrane segments (helical) span residues 48–68 (LYSL…PLSI) and 83–103 (VFLF…CLID).

The protein resides in the membrane. This is an uncharacterized protein from Saccharomyces cerevisiae (strain ATCC 204508 / S288c) (Baker's yeast).